The chain runs to 339 residues: Geranylgeranyl transferase type-2 subunit beta (339 aa).

Residue threonine 11 is modified to Phosphothreonine. PFTB repeat units follow at residues 28–69, 76–117, 124–165, 172–213, 220–261, and 268–310; these read LEKH…DLMG, REEI…TLYD, VDKV…ALLG, VEKA…AITS, SDLL…KIIG, and REKL…SLLG. Residues 198–200 and 240–243 contribute to the geranylgeranyl diphosphate site; these read HAG and RPEK. Zn(2+) is bound by residues aspartate 246 and cysteine 248. Residues tyrosine 249 and 249-252 each bind geranylgeranyl diphosphate; that span reads YSWW. A Zn(2+)-binding site is contributed by histidine 298.

This sequence belongs to the protein prenyltransferase subunit beta family. As to quaternary structure, heterotrimer composed of RABGGTA, RABGGTB and CHM; within this trimer, RABGGTA and RABGGTB form the catalytic component B, while CHM (component A) mediates peptide substrate binding. The Rab GGTase dimer (RGGT) interacts with CHM (component A) prior to Rab protein binding; the association is stabilized by geranylgeranyl pyrophosphate (GGpp). The CHM:RGGT:Rab complex is destabilized by GGpp. Interaction of RABGGTB with prenylated PTP4A2 precludes its association with RABGGTA and inhibits enzyme activity. Interacts with CHODL. Interacts with non-phosphorylated form of RAB8A; phosphorylation of RAB8A at 'Thr-72' disrupts this interaction. Requires Zn(2+) as cofactor. In terms of tissue distribution, ubiquitous. Detected in all the major organs in adult animals.

It catalyses the reaction geranylgeranyl diphosphate + L-cysteinyl-[protein] = S-geranylgeranyl-L-cysteinyl-[protein] + diphosphate. With respect to regulation, the enzymatic reaction requires the aid of a Rab escort protein (also called component A), such as CHM. Its function is as follows. Catalyzes the transfer of a geranylgeranyl moiety from geranylgeranyl diphosphate to both cysteines of Rab proteins with the C-terminal sequence -XXCC, -XCXC and -CCXX, such as RAB1A, RAB3A, RAB5A and RAB7A. The chain is Geranylgeranyl transferase type-2 subunit beta (Rabggtb) from Mus musculus (Mouse).